The sequence spans 316 residues: Cell division protein ZipA (316 aa).

The Periplasmic segment spans residues Met1–Arg5. The chain crosses the membrane as a helical span at residues Phe6–Ser26. The Cytoplasmic segment spans residues Ser27–Ala316. Residues Gly36 to Asp65 form a disordered region. Residues Gly41 to Arg57 show a composition bias toward basic and acidic residues.

The protein belongs to the ZipA family. As to quaternary structure, interacts with FtsZ via their C-terminal domains.

It localises to the cell inner membrane. Functionally, essential cell division protein that stabilizes the FtsZ protofilaments by cross-linking them and that serves as a cytoplasmic membrane anchor for the Z ring. Also required for the recruitment to the septal ring of downstream cell division proteins. The chain is Cell division protein ZipA from Vibrio parahaemolyticus serotype O3:K6 (strain RIMD 2210633).